Reading from the N-terminus, the 273-residue chain is UPF0380 protein YubP (273 aa).

This sequence belongs to the UPF0380 family.

The sequence is that of UPF0380 protein YubP (yubP) from Escherichia coli (strain K12).